The chain runs to 582 residues: Semenogelin-2 (582 aa).

Residues 1–23 form the signal peptide; the sequence is MKSIILFVLSLLLILEKQAAVMG. The interval 24–59 is disordered; the sequence is QKGGSKGQLPSGSSQFPHGQKGQHYFGQKDQQHTKS. Positions 31 to 40 are enriched in polar residues; it reads QLPSGSSQFP. A run of 3 repeats spans residues 70-129, 141-200, and 201-260. The interval 70 to 559 is repeat-rich region; that stretch reads HVDINDHDWT…SSESHNIVIT (490 aa). Disordered regions lie at residues 132–160, 173–194, 228–248, and 269–582; these read GGQA…SQCS, KEQA…QSSY, EEHS…RLQH, and QTKN…PIST. 2 stretches are compositionally biased toward polar residues: residues 137 to 160 and 174 to 194; these read HGTQ…SQCS and EQAS…QSSY. A 4 X 60 AA tandem repeats, type I region spans residues 261–500; that stretch reads LVYNKNQHQT…QSSISFQIEK (240 aa). Asparagine 272 carries N-linked (GlcNAc...) asparagine glycosylation. Residues 292 to 310 are compositionally biased toward basic and acidic residues; sequence RTEERQLHHGEKSVQKDVS. Polar residues predominate over residues 325–334; sequence KSQNQVTIHS. The span at 335–345 shows a compositional bias: basic and acidic residues; it reads QDQEHGHKENK. Over residues 372-397 the composition is skewed to polar residues; it reads GSISIQTEEQIHGKSQNQVRIPSQAQ. Residues 413-426 show a composition bias toward basic and acidic residues; sequence TEERRLNSGEKDVQ. Residues 445-455 show a composition bias toward polar residues; sequence KSQNQVTIPSQ. Over residues 456 to 465 the composition is skewed to basic and acidic residues; that stretch reads DQEHGHKENK. 2 stretches are compositionally biased toward polar residues: residues 482 to 496 and 506 to 532; these read GKST…SISF and SQIQ…QSAD. Residues 501-559 form a 3-2 repeat; the sequence is LVEGKSQIQTPNPNQDQWSGQNAKGKSGQSADSKQDLLSHEQKGRYKQESSESHNIVIT. Basic and acidic residues-rich tracts occupy residues 533–552 and 559–582; these read SKQD…ESSE and TEHE…PIST.

This sequence belongs to the semenogelin family. Interacts with SERPINA5. In terms of processing, semenogelin-2 is thought to form both the 71 kDa polypeptide and, in its glycosylated form, the 76 kDa polypeptide. As to expression, seminal vesicles, and to a much lesser extent, epididymis.

It is found in the secreted. Its function is as follows. Participates in the formation of a gel matrix (sperm coagulum) entrapping the accessory gland secretions and ejaculated spermatozoa. This is Semenogelin-2 (SEMG2) from Homo sapiens (Human).